The primary structure comprises 364 residues: Probable cysteine protease RDL4 (364 aa).

The first 23 residues, 1 to 23, serve as a signal peptide directing secretion; the sequence is MGSAKSAMLILLVAMVIASCATA. A propeptide spans 24-136 (activation peptide); sequence IDMSVVSYDD…DRYKTSADDV (113 aa). Asparagine 87 carries an N-linked (GlcNAc...) asparagine glycan. Intrachain disulfides connect cysteine 158/cysteine 199, cysteine 192/cysteine 232, and cysteine 291/cysteine 342. Cysteine 161 is an active-site residue. Active-site residues include histidine 297 and asparagine 317.

It belongs to the peptidase C1 family. Expressed in inflorescences.

Its function is as follows. Probable thiol protease. This chain is Probable cysteine protease RDL4, found in Arabidopsis thaliana (Mouse-ear cress).